The following is a 248-amino-acid chain: Isoprenyl transferase (248 aa).

Residue D28 is part of the active site. D28 serves as a coordination point for Mg(2+). Residues 29-32 (GNGR), W33, R41, H45, and 73-75 (SSE) each bind substrate. The active-site Proton acceptor is the N76. Residues W77, R79, R196, and 202–204 (RLS) contribute to the substrate site. Mg(2+) is bound at residue E215.

This sequence belongs to the UPP synthase family. As to quaternary structure, homodimer. It depends on Mg(2+) as a cofactor.

Functionally, catalyzes the condensation of isopentenyl diphosphate (IPP) with allylic pyrophosphates generating different type of terpenoids. The chain is Isoprenyl transferase from Zymomonas mobilis subsp. mobilis (strain ATCC 31821 / ZM4 / CP4).